The following is a 1653-amino-acid chain: Cortactin-binding protein 2 (1653 aa).

Disordered regions lie at residues 1-27 (MATD…AEAA), 203-222 (KKKT…RSTE), 268-297 (QLKR…SVGT), 314-339 (ESTE…KGSV), and 356-609 (HGDL…PSID). A coiled-coil region spans residues 119-276 (RKMQERMSTQ…EQLKRGSDSK (158 aa)). Polar residues predominate over residues 379 to 389 (GPSTGSPPDLT). Residues 390–408 (SSAAQSPAAAPHGLPPAHG) are compositionally biased toward low complexity. Composition is skewed to polar residues over residues 444–470 (GNAN…TSRD), 478–490 (ARNT…SRFT), and 573–584 (TVASSPPSSLPQ). Arginine 488 carries the post-translational modification Asymmetric dimethylarginine. ANK repeat units follow at residues 700 to 730 (GRPT…DINY), 734 to 763 (DGHS…QVNA), 767 to 796 (NGFT…HINH), 800 to 829 (GGQT…DRSV), and 833 to 862 (DGWT…PAHG). The disordered stretch occupies residues 860 to 892 (AHGNSLNEEEPESDASDLDEGEESSEGKSKPVV). The segment covering 866–883 (NEEEPESDASDLDEGEES) has biased composition (acidic residues). The stretch at 903–933 (EGWTAAHIAASKGFKNCLEILCRHRGLEPER) is one ANK 6 repeat. The interval 1441 to 1472 (ESGAWRKVNTSPRRKSGRFSSPTWNKPDLSNE) is disordered. Phosphoserine is present on serine 1514. Residues 1545 to 1653 (DLRTFDSSGN…KNEHIEKLNK (109 aa)) are disordered. Polar residues-rich tracts occupy residues 1549–1564 (FDSS…TANN) and 1572–1589 (KEVS…SNNK). Residues 1614–1628 (SQNTKRSSSSSNTRQ) are compositionally biased toward low complexity. The span at 1635-1653 (SKEENWNLHKNEHIEKLNK) shows a compositional bias: basic and acidic residues.

Interacts with CTTN/cortactin SH3 domain. Interacts with STRN, STRN4/zinedin and MOB4/phocein; this interactions mediate the association with the STRIPAK core complex and may regulate dendritic spine distribution of the STRIPAK complex in hippocampal neurons. Activation of glutamate receptors weakens the interaction with STRN and STRN4.

It is found in the cytoplasm. The protein resides in the cell cortex. It localises to the cell projection. The protein localises to the dendritic spine. Functionally, regulates the dendritic spine distribution of CTTN/cortactin in hippocampal neurons, and thus controls dendritic spinogenesis and dendritic spine maintenance. Associates with the striatin-interacting phosphatase and kinase (STRIPAK) core complex to regulate dendritic spine distribution of the STRIPAK complex in hippocampal neurons. This chain is Cortactin-binding protein 2 (CTTNBP2), found in Eulemur macaco macaco (Black lemur).